A 219-amino-acid polypeptide reads, in one-letter code: UPF0376 protein C36C5.12 (219 aa).

Residues 1–20 (MGRLDVKNSWIEFHQDEMTS) are Cytoplasmic-facing. A helical; Signal-anchor for type II membrane protein transmembrane segment spans residues 21 to 43 (FLKLAIIGTVLLGVAHGANLTAA). At 44–219 (EKETYCELRS…VSKCDFSRLG (176 aa)) the chain is on the extracellular side. 2 N-linked (GlcNAc...) asparagine glycosylation sites follow: asparagine 104 and asparagine 204.

Belongs to the UPF0376 family.

The protein resides in the membrane. In Caenorhabditis elegans, this protein is UPF0376 protein C36C5.12.